A 355-amino-acid polypeptide reads, in one-letter code: Elongation factor Ts (355 aa).

The tract at residues 82–85 (TDFV) is involved in Mg(2+) ion dislocation from EF-Tu.

It belongs to the EF-Ts family.

The protein resides in the cytoplasm. Its function is as follows. Associates with the EF-Tu.GDP complex and induces the exchange of GDP to GTP. It remains bound to the aminoacyl-tRNA.EF-Tu.GTP complex up to the GTP hydrolysis stage on the ribosome. In Helicobacter pylori (strain ATCC 700392 / 26695) (Campylobacter pylori), this protein is Elongation factor Ts (tsf).